A 214-amino-acid chain; its full sequence is Glutathione S-transferase F11 (214 aa).

Positions 2–82 constitute a GST N-terminal domain; that stretch reads VVKVYGQIKA…YYATKYADQG (81 aa). Residues 11 to 12, 40 to 41, 53 to 54, and 66 to 67 contribute to the glutathione site; these read AA, QK, QV, and ES. Residues 89-214 enclose the GST C-terminal domain; that stretch reads TLEGRAIVDQ…WKKLMELAAY (126 aa).

It belongs to the GST superfamily. Phi family.

It is found in the cytoplasm. Its subcellular location is the cytosol. It catalyses the reaction RX + glutathione = an S-substituted glutathione + a halide anion + H(+). Its function is as follows. May be involved in the conjugation of reduced glutathione to a wide number of exogenous and endogenous hydrophobic electrophiles and have a detoxification role against certain herbicides. In Arabidopsis thaliana (Mouse-ear cress), this protein is Glutathione S-transferase F11.